Reading from the N-terminus, the 347-residue chain is Holliday junction branch migration complex subunit RuvB (347 aa).

The large ATPase domain (RuvB-L) stretch occupies residues 1–186 (MKDENSINFL…FGITARFELY (186 aa)). Residues leucine 25, arginine 26, glycine 67, lysine 70, threonine 71, threonine 72, 133–135 (EDY), arginine 176, tyrosine 186, and arginine 223 contribute to the ATP site. Threonine 71 is a binding site for Mg(2+). The segment at 187–257 (SEIELVEIIK…IVSIGLEMLR (71 aa)) is small ATPAse domain (RuvB-S). A head domain (RuvB-H) region spans residues 260-347 (GEGLDEQDRN…DISENQRVSF (88 aa)). Residues arginine 315 and arginine 320 each contribute to the DNA site.

The protein belongs to the RuvB family. In terms of assembly, homohexamer. Forms an RuvA(8)-RuvB(12)-Holliday junction (HJ) complex. HJ DNA is sandwiched between 2 RuvA tetramers; dsDNA enters through RuvA and exits via RuvB. An RuvB hexamer assembles on each DNA strand where it exits the tetramer. Each RuvB hexamer is contacted by two RuvA subunits (via domain III) on 2 adjacent RuvB subunits; this complex drives branch migration. In the full resolvosome a probable DNA-RuvA(4)-RuvB(12)-RuvC(2) complex forms which resolves the HJ.

It is found in the cytoplasm. It carries out the reaction ATP + H2O = ADP + phosphate + H(+). In terms of biological role, the RuvA-RuvB-RuvC complex processes Holliday junction (HJ) DNA during genetic recombination and DNA repair, while the RuvA-RuvB complex plays an important role in the rescue of blocked DNA replication forks via replication fork reversal (RFR). RuvA specifically binds to HJ cruciform DNA, conferring on it an open structure. The RuvB hexamer acts as an ATP-dependent pump, pulling dsDNA into and through the RuvAB complex. RuvB forms 2 homohexamers on either side of HJ DNA bound by 1 or 2 RuvA tetramers; 4 subunits per hexamer contact DNA at a time. Coordinated motions by a converter formed by DNA-disengaged RuvB subunits stimulates ATP hydrolysis and nucleotide exchange. Immobilization of the converter enables RuvB to convert the ATP-contained energy into a lever motion, pulling 2 nucleotides of DNA out of the RuvA tetramer per ATP hydrolyzed, thus driving DNA branch migration. The RuvB motors rotate together with the DNA substrate, which together with the progressing nucleotide cycle form the mechanistic basis for DNA recombination by continuous HJ branch migration. Branch migration allows RuvC to scan DNA until it finds its consensus sequence, where it cleaves and resolves cruciform DNA. The protein is Holliday junction branch migration complex subunit RuvB of Borrelia garinii subsp. bavariensis (strain ATCC BAA-2496 / DSM 23469 / PBi) (Borreliella bavariensis).